Here is a 354-residue protein sequence, read N- to C-terminus: Uroporphyrinogen decarboxylase (354 aa).

Substrate-binding positions include 25-29 (RQAGR), D75, Y152, T207, and H330.

This sequence belongs to the uroporphyrinogen decarboxylase family. As to quaternary structure, homodimer.

It is found in the cytoplasm. The catalysed reaction is uroporphyrinogen III + 4 H(+) = coproporphyrinogen III + 4 CO2. It participates in porphyrin-containing compound metabolism; protoporphyrin-IX biosynthesis; coproporphyrinogen-III from 5-aminolevulinate: step 4/4. Its function is as follows. Catalyzes the decarboxylation of four acetate groups of uroporphyrinogen-III to yield coproporphyrinogen-III. The polypeptide is Uroporphyrinogen decarboxylase (Xanthomonas oryzae pv. oryzae (strain PXO99A)).